The primary structure comprises 392 residues: Lipid-A-disaccharide synthase (392 aa).

This sequence belongs to the LpxB family.

It catalyses the reaction a lipid X + a UDP-2-N,3-O-bis[(3R)-3-hydroxyacyl]-alpha-D-glucosamine = a lipid A disaccharide + UDP + H(+). Its pathway is bacterial outer membrane biogenesis; LPS lipid A biosynthesis. Functionally, condensation of UDP-2,3-diacylglucosamine and 2,3-diacylglucosamine-1-phosphate to form lipid A disaccharide, a precursor of lipid A, a phosphorylated glycolipid that anchors the lipopolysaccharide to the outer membrane of the cell. The protein is Lipid-A-disaccharide synthase of Prochlorococcus marinus (strain MIT 9313).